The sequence spans 125 residues: Large ribosomal subunit protein bL12 (125 aa).

This sequence belongs to the bacterial ribosomal protein bL12 family. As to quaternary structure, homodimer. Part of the ribosomal stalk of the 50S ribosomal subunit. Forms a multimeric L10(L12)X complex, where L10 forms an elongated spine to which 2 to 4 L12 dimers bind in a sequential fashion. Binds GTP-bound translation factors.

In terms of biological role, forms part of the ribosomal stalk which helps the ribosome interact with GTP-bound translation factors. Is thus essential for accurate translation. This Azoarcus sp. (strain BH72) protein is Large ribosomal subunit protein bL12.